The primary structure comprises 392 residues: ATP phosphoribosyltransferase regulatory subunit (392 aa).

The protein belongs to the class-II aminoacyl-tRNA synthetase family. HisZ subfamily. In terms of assembly, heteromultimer composed of HisG and HisZ subunits.

The protein resides in the cytoplasm. Its pathway is amino-acid biosynthesis; L-histidine biosynthesis; L-histidine from 5-phospho-alpha-D-ribose 1-diphosphate: step 1/9. Required for the first step of histidine biosynthesis. May allow the feedback regulation of ATP phosphoribosyltransferase activity by histidine. This chain is ATP phosphoribosyltransferase regulatory subunit, found in Geobacillus sp. (strain WCH70).